The chain runs to 366 residues: Zinc finger protein ubi-d4 B (366 aa).

Disordered stretches follow at residues 41–94 (ASAP…DGSS) and 140–167 (DDLD…IGGA). Residues 76 to 86 (PDPEQMLKKEG) show a composition bias toward basic and acidic residues. Residues 140–149 (DDLDDEDYEE) are compositionally biased toward acidic residues. The C2H2-type zinc finger occupies 183–206 (YACDICGKRYKNRPGLSYHYAHSH). The segment at 211 to 243 (EGAGAEDKEDSQPPTPIMHRSEEQKSKKGPDGL) is disordered. Residues 229–240 (HRSEEQKSKKGP) show a composition bias toward basic and acidic residues. PHD-type zinc fingers lie at residues 247–307 (NNYC…CKCC) and 304–354 (CKCC…CLDL).

It belongs to the requiem/DPF family.

Its subcellular location is the cytoplasm. It localises to the nucleus. Functionally, may be a transcription factor required for the apoptosis response following survival factor withdrawal from myeloid cells. Might also have a role in the development and maturation of lymphoid cells. This Xenopus laevis (African clawed frog) protein is Zinc finger protein ubi-d4 B (req-b).